We begin with the raw amino-acid sequence, 586 residues long: Heterogeneous nuclear ribonucleoprotein L (586 aa).

A compositionally biased stretch (basic residues) spans Met1–Leu16. A disordered region spans residues Met1–Ala97. Basic and acidic residues predominate over residues Glu17–Arg27. The span at Arg28–Ala37 shows a compositional bias: low complexity. The segment covering Ala38–Gly54 has biased composition (gly residues). Residues Lys59 and Lys62 each participate in a glycyl lysine isopeptide (Lys-Gly) (interchain with G-Cter in SUMO2) cross-link. The segment covering Gln69–Glu87 has biased composition (gly residues). Ser98 is modified (phosphoserine). The RRM 1 domain maps to Pro99 to Ser173. Lys133 participates in a covalent cross-link: Glycyl lysine isopeptide (Lys-Gly) (interchain with G-Cter in SUMO2). Ser182 is modified (phosphoserine). In terms of domain architecture, RRM 2 spans Ser190–Pro267. An N6-acetyllysine modification is found at Lys266. Residues Asp281 to Asn298 show a composition bias toward polar residues. The disordered stretch occupies residues Asp281–Ala376. Phosphoserine occurs at positions 288 and 295. Lys299 is covalently cross-linked (Glycyl lysine isopeptide (Lys-Gly) (interchain with G-Cter in SUMO2)). Residues Arg351 and Arg355 each carry the asymmetric dimethylarginine modification. Positions Gly361–Tyr372 are enriched in pro residues. Ser378 bears the Phosphoserine mark. 2 RRM domains span residues Pro379–Glu476 and Arg492–Ser580. Ser541 bears the Phosphoserine; by CaMK4 mark. A Glycyl lysine isopeptide (Lys-Gly) (interchain with G-Cter in SUMO2) cross-link involves residue Lys565.

As to quaternary structure, identified in a IGF2BP1-dependent mRNP granule complex containing untranslated mRNAs. Interacts with HNRNPLL. Interacts with APEX1; the interaction is DNA-dependent. Component of a complex with SETD2. Interacts with ELAVL1. Part of a transcription inhibitory ribonucleoprotein complex composed at least of the circular RNA circZNF827, ZNF827 and HNRNPK. Interacts with CHD8 in an RNA-dependent manner. Post-translationally, phosphorylation at Ser-541 by CaMK4 enhances interaction with a CaMK4-responsive RNA element (CaRRE1), and prevents inclusion of the stress axis-regulated exon (STREX) of the KCNMA1 potassium channel transcripts upon membrane depolarization. As to expression, detected in hematopoietic cells, including lymphoid progenitor cells.

It localises to the nucleus. The protein resides in the nucleoplasm. Its subcellular location is the cytoplasm. Its function is as follows. Splicing factor binding to exonic or intronic sites and acting as either an activator or repressor of exon inclusion. Exhibits a binding preference for CA-rich elements. Component of the heterogeneous nuclear ribonucleoprotein (hnRNP) complexes and associated with most nascent transcripts. Associates, together with APEX1, to the negative calcium responsive element (nCaRE) B2 of the APEX2 promoter. As part of a ribonucleoprotein complex composed at least of ZNF827, HNRNPK and the circular RNA circZNF827 that nucleates the complex on chromatin, may negatively regulate the transcription of genes involved in neuronal differentiation. Regulates alternative splicing of a core group of genes involved in neuronal differentiation, likely by mediating H3K36me3-coupled transcription elongation and co-transcriptional RNA processing via interaction with CHD8. In Mus musculus (Mouse), this protein is Heterogeneous nuclear ribonucleoprotein L (Hnrnpl).